The chain runs to 481 residues: Aspartyl/glutamyl-tRNA(Asn/Gln) amidotransferase subunit B (481 aa).

Belongs to the GatB/GatE family. GatB subfamily. Heterotrimer of A, B and C subunits.

The catalysed reaction is L-glutamyl-tRNA(Gln) + L-glutamine + ATP + H2O = L-glutaminyl-tRNA(Gln) + L-glutamate + ADP + phosphate + H(+). The enzyme catalyses L-aspartyl-tRNA(Asn) + L-glutamine + ATP + H2O = L-asparaginyl-tRNA(Asn) + L-glutamate + ADP + phosphate + 2 H(+). Its function is as follows. Allows the formation of correctly charged Asn-tRNA(Asn) or Gln-tRNA(Gln) through the transamidation of misacylated Asp-tRNA(Asn) or Glu-tRNA(Gln) in organisms which lack either or both of asparaginyl-tRNA or glutaminyl-tRNA synthetases. The reaction takes place in the presence of glutamine and ATP through an activated phospho-Asp-tRNA(Asn) or phospho-Glu-tRNA(Gln). The protein is Aspartyl/glutamyl-tRNA(Asn/Gln) amidotransferase subunit B of Pseudomonas putida (strain ATCC 700007 / DSM 6899 / JCM 31910 / BCRC 17059 / LMG 24140 / F1).